We begin with the raw amino-acid sequence, 228 residues long: Carbonic anhydrase (228 aa).

Positions 56, 58, 112, and 115 each coordinate Zn(2+).

The protein belongs to the beta-class carbonic anhydrase family. Requires Zn(2+) as cofactor.

The enzyme catalyses hydrogencarbonate + H(+) = CO2 + H2O. In terms of biological role, catalyzes the reversible hydration of CO(2) to H(2)CO(3). The main role may be to provide inorganic carbon for the bicarbonate-dependent carboxylation reactions catalyzed by pyruvate carboxylase, acetyl-CoA carboxylase and carbamoyl-phosphate synthetase. Involved in osmoadaptation. The sequence is that of Carbonic anhydrase from Emericella nidulans (strain FGSC A4 / ATCC 38163 / CBS 112.46 / NRRL 194 / M139) (Aspergillus nidulans).